Here is a 216-residue protein sequence, read N- to C-terminus: Probable calcium-binding protein CML35 (216 aa).

The disordered stretch occupies residues 18 to 58; that stretch reads TKSKASVSRSEPSSFSSNASSSSSDGSYGNLKQGPTATPIS. The segment covering 23–44 has biased composition (low complexity); the sequence is SVSRSEPSSFSSNASSSSSDGS. EF-hand domains are found at residues 66–101, 103–138, 141–176, and 178–213; these read DFYT…LSHE, PSQE…TSGE, VETE…IGDE, and CTLE…AMND. 4 residues coordinate Ca(2+): D79, D81, D83, and D90. Residues D154, D156, N158, K160, E165, D191, N193, D195, and D202 each contribute to the Ca(2+) site.

Its function is as follows. Potential calcium sensor. In Arabidopsis thaliana (Mouse-ear cress), this protein is Probable calcium-binding protein CML35 (CML35).